The following is a 336-amino-acid chain: Glycerol-3-phosphate dehydrogenase [NAD(P)+] (336 aa).

NADPH contacts are provided by S11, W12, R32, and K109. Residues K109, G140, and S142 each contribute to the sn-glycerol 3-phosphate site. A144 is an NADPH binding site. 5 residues coordinate sn-glycerol 3-phosphate: K195, D248, S258, R259, and N260. The active-site Proton acceptor is the K195. Position 259 (R259) interacts with NADPH. NADPH is bound by residues V283 and E285.

It belongs to the NAD-dependent glycerol-3-phosphate dehydrogenase family.

It is found in the cytoplasm. The enzyme catalyses sn-glycerol 3-phosphate + NAD(+) = dihydroxyacetone phosphate + NADH + H(+). It catalyses the reaction sn-glycerol 3-phosphate + NADP(+) = dihydroxyacetone phosphate + NADPH + H(+). It participates in membrane lipid metabolism; glycerophospholipid metabolism. Catalyzes the reduction of the glycolytic intermediate dihydroxyacetone phosphate (DHAP) to sn-glycerol 3-phosphate (G3P), the key precursor for phospholipid synthesis. This chain is Glycerol-3-phosphate dehydrogenase [NAD(P)+], found in Leuconostoc mesenteroides subsp. mesenteroides (strain ATCC 8293 / DSM 20343 / BCRC 11652 / CCM 1803 / JCM 6124 / NCDO 523 / NBRC 100496 / NCIMB 8023 / NCTC 12954 / NRRL B-1118 / 37Y).